The chain runs to 154 residues: UPF0178 protein Gbem_2221 (154 aa).

It belongs to the UPF0178 family.

The sequence is that of UPF0178 protein Gbem_2221 from Citrifermentans bemidjiense (strain ATCC BAA-1014 / DSM 16622 / JCM 12645 / Bem) (Geobacter bemidjiensis).